The primary structure comprises 425 residues: Serine--tRNA ligase (425 aa).

230 to 232 (TAE) provides a ligand contact to L-serine. 261–263 (RSE) contributes to the ATP binding site. Glu284 is an L-serine binding site. 348 to 351 (EISS) provides a ligand contact to ATP. Ser384 provides a ligand contact to L-serine.

It belongs to the class-II aminoacyl-tRNA synthetase family. Type-1 seryl-tRNA synthetase subfamily. As to quaternary structure, homodimer. The tRNA molecule binds across the dimer.

Its subcellular location is the cytoplasm. The enzyme catalyses tRNA(Ser) + L-serine + ATP = L-seryl-tRNA(Ser) + AMP + diphosphate + H(+). The catalysed reaction is tRNA(Sec) + L-serine + ATP = L-seryl-tRNA(Sec) + AMP + diphosphate + H(+). It functions in the pathway aminoacyl-tRNA biosynthesis; selenocysteinyl-tRNA(Sec) biosynthesis; L-seryl-tRNA(Sec) from L-serine and tRNA(Sec): step 1/1. Functionally, catalyzes the attachment of serine to tRNA(Ser). Is also able to aminoacylate tRNA(Sec) with serine, to form the misacylated tRNA L-seryl-tRNA(Sec), which will be further converted into selenocysteinyl-tRNA(Sec). In Streptococcus pyogenes serotype M12 (strain MGAS2096), this protein is Serine--tRNA ligase.